The chain runs to 78 residues: Large ribosomal subunit protein bL28 (78 aa).

The tract at residues 1–33 (MARKDDVTGEGPVTGNSVSDSNQKTNRRFKRNL) is disordered. Polar residues predominate over residues 14–24 (TGNSVSDSNQK).

Belongs to the bacterial ribosomal protein bL28 family.

The protein is Large ribosomal subunit protein bL28 of Salinibacter ruber (strain DSM 13855 / M31).